A 436-amino-acid polypeptide reads, in one-letter code: Transcription termination factor Rho (436 aa).

The region spanning 65 to 140 is the Rho RNA-BD domain; the sequence is LVFVKGVLEI…IRMESVNGLP (76 aa). Residues 185–190, 197–202, and Arg-228 contribute to the ATP site; these read GKGQRG and KAGKTV.

The protein belongs to the Rho family. In terms of assembly, homohexamer. The homohexamer assembles into an open ring structure.

Facilitates transcription termination by a mechanism that involves Rho binding to the nascent RNA, activation of Rho's RNA-dependent ATPase activity, and release of the mRNA from the DNA template. The chain is Transcription termination factor Rho from Aquifex aeolicus (strain VF5).